Consider the following 206-residue polypeptide: Ras-related protein O-RAL (206 aa).

Residue 21 to 28 (GSGGVGKS) participates in GTP binding. Positions 43–51 (YEPTKADSY) match the Effector region motif. GTP contacts are provided by residues 68 to 72 (DTAGQ) and 128 to 131 (NKSD). The span at 180 to 189 (KMSENKDKNG) shows a compositional bias: basic and acidic residues. The segment at 180 to 206 (KMSENKDKNGKKSSRNKKSLRERCCIL) is disordered. Residue C203 is modified to Cysteine methyl ester. Residue C203 is the site of S-geranylgeranyl cysteine attachment. The propeptide at 204–206 (CIL) is removed in mature form.

It belongs to the small GTPase superfamily. Ras family.

The protein localises to the cell membrane. The enzyme catalyses GTP + H2O = GDP + phosphate + H(+). This Diplobatis ommata (Ocellated electric ray) protein is Ras-related protein O-RAL.